The following is a 114-amino-acid chain: UPF0145 protein PF1756 (114 aa).

Belongs to the UPF0145 family.

The protein is UPF0145 protein PF1756 of Pyrococcus furiosus (strain ATCC 43587 / DSM 3638 / JCM 8422 / Vc1).